Here is a 349-residue protein sequence, read N- to C-terminus: D-arabinose 1-dehydrogenase (NADP(+)) (349 aa).

Zn(2+)-binding residues include C46, H70, D99, C102, C105, C113, and D155.

The protein belongs to the zinc-containing alcohol dehydrogenase family. Homotetramer. Dimer of dimers. It depends on Zn(2+) as a cofactor.

It catalyses the reaction D-arabinose + NADP(+) = D-arabinono-1,4-lactone + NADPH + H(+). In terms of biological role, participates in a pentose oxidation pathway that converts D-arabinose to 2-oxoglutarate. Catalyzes the NADP-dependent conversion of D-arabinose to D-arabinono-1,4-lactone. In vitro, can also use L-fucose, L-galactose and D-ribose. Shows highest activity with L-fucose, in combinaison with NAD, and lower activity toward L-galactose and D-ribose. When acting on its physiological substrate, D-arabinose, shows a clear preference for NADP over NAD. The chain is D-arabinose 1-dehydrogenase (NADP(+)) from Saccharolobus solfataricus (strain ATCC 35092 / DSM 1617 / JCM 11322 / P2) (Sulfolobus solfataricus).